The chain runs to 722 residues: Polyribonucleotide nucleotidyltransferase (722 aa).

The Mg(2+) site is built by aspartate 487 and aspartate 493. Residues 554–613 (PRIETFKIPTDKIREVIGTGGKVIREIVEKTGAKVNIEDDGTVKVASSDGESIKAAIKWI) form the KH domain. One can recognise an S1 motif domain in the interval 623 to 691 (GEIYEGTVVK…DRGKTRLSMK (69 aa)). The tract at residues 697–722 (TGEDLEAKQKAEAKAEGEAPAQAAGE) is disordered. Residues 701–713 (LEAKQKAEAKAEG) show a composition bias toward basic and acidic residues.

It belongs to the polyribonucleotide nucleotidyltransferase family. The cofactor is Mg(2+).

It is found in the cytoplasm. The catalysed reaction is RNA(n+1) + phosphate = RNA(n) + a ribonucleoside 5'-diphosphate. Involved in mRNA degradation. Catalyzes the phosphorolysis of single-stranded polyribonucleotides processively in the 3'- to 5'-direction. The chain is Polyribonucleotide nucleotidyltransferase from Rhodopseudomonas palustris (strain TIE-1).